The chain runs to 509 residues: 3-octaprenyl-4-hydroxybenzoate carboxy-lyase (509 aa).

Residue N179 participates in Mn(2+) binding. Prenylated FMN-binding positions include 182-184 (IYR), 196-198 (RWL), and 201-202 (RG). A Mn(2+)-binding site is contributed by E245. The Proton donor role is filled by D304.

This sequence belongs to the UbiD family. In terms of assembly, homohexamer. The cofactor is prenylated FMN. Mn(2+) is required as a cofactor.

It is found in the cell membrane. The enzyme catalyses a 4-hydroxy-3-(all-trans-polyprenyl)benzoate + H(+) = a 2-(all-trans-polyprenyl)phenol + CO2. It functions in the pathway cofactor biosynthesis; ubiquinone biosynthesis. Functionally, catalyzes the decarboxylation of 3-octaprenyl-4-hydroxy benzoate to 2-octaprenylphenol, an intermediate step in ubiquinone biosynthesis. The chain is 3-octaprenyl-4-hydroxybenzoate carboxy-lyase from Cupriavidus pinatubonensis (strain JMP 134 / LMG 1197) (Cupriavidus necator (strain JMP 134)).